We begin with the raw amino-acid sequence, 905 residues long: Protein translocase subunit SecA (905 aa).

ATP-binding positions include Gln86, 104 to 108 (GEGKT), and Asp499. Zn(2+)-binding residues include Cys890, Cys892, Cys901, and His902.

The protein belongs to the SecA family. In terms of assembly, monomer and homodimer. Part of the essential Sec protein translocation apparatus which comprises SecA, SecYEG and auxiliary proteins SecDF-YajC and YidC. It depends on Zn(2+) as a cofactor.

The protein resides in the cell inner membrane. It localises to the cytoplasm. The enzyme catalyses ATP + H2O + cellular proteinSide 1 = ADP + phosphate + cellular proteinSide 2.. In terms of biological role, part of the Sec protein translocase complex. Interacts with the SecYEG preprotein conducting channel. Has a central role in coupling the hydrolysis of ATP to the transfer of proteins into and across the cell membrane, serving both as a receptor for the preprotein-SecB complex and as an ATP-driven molecular motor driving the stepwise translocation of polypeptide chains across the membrane. The sequence is that of Protein translocase subunit SecA from Rickettsia typhi (strain ATCC VR-144 / Wilmington).